The sequence spans 96 residues: Large ribosomal subunit protein eL43 (96 aa).

Residues Cys-41, Cys-44, Cys-59, and Cys-62 each contribute to the Zn(2+) site. A C4-type zinc finger spans residues 41-62 (CPVCAFPKLKRAGTSIWVCEKC).

The protein belongs to the eukaryotic ribosomal protein eL43 family. Putative zinc-binding subfamily. In terms of assembly, part of the 50S ribosomal subunit. The cofactor is Zn(2+).

Functionally, binds to the 23S rRNA. The polypeptide is Large ribosomal subunit protein eL43 (Methanococcus maripaludis (strain DSM 14266 / JCM 13030 / NBRC 101832 / S2 / LL)).